The primary structure comprises 356 residues: S-adenosylmethionine:tRNA ribosyltransferase-isomerase (356 aa).

This sequence belongs to the QueA family. Monomer.

The protein resides in the cytoplasm. The catalysed reaction is 7-aminomethyl-7-carbaguanosine(34) in tRNA + S-adenosyl-L-methionine = epoxyqueuosine(34) in tRNA + adenine + L-methionine + 2 H(+). The protein operates within tRNA modification; tRNA-queuosine biosynthesis. Functionally, transfers and isomerizes the ribose moiety from AdoMet to the 7-aminomethyl group of 7-deazaguanine (preQ1-tRNA) to give epoxyqueuosine (oQ-tRNA). The polypeptide is S-adenosylmethionine:tRNA ribosyltransferase-isomerase (Yersinia pseudotuberculosis serotype O:3 (strain YPIII)).